The following is a 431-amino-acid chain: Argininosuccinate lyase (431 aa).

It belongs to the lyase 1 family. Argininosuccinate lyase subfamily.

Its subcellular location is the cytoplasm. The catalysed reaction is 2-(N(omega)-L-arginino)succinate = fumarate + L-arginine. It functions in the pathway amino-acid biosynthesis; L-arginine biosynthesis; L-arginine from L-ornithine and carbamoyl phosphate: step 3/3. In Stenotrophomonas maltophilia (strain R551-3), this protein is Argininosuccinate lyase.